Reading from the N-terminus, the 207-residue chain is MSEALSDEALLELAEHIAVRRENDVISTQAVGELTVNATLSGVIGLIEFLRNDPNCRFSTLIDITAVDNPARPARFDVVYHLLSMYQNQRIRVKVQVREDELVPSLIGVFPGANWYEREVFDLFGILFSGHSDLRRILTDYGFRGHPLRKDFPTTGYVEVRWSDIEKRVVYEPVNLVQEYRQFDFLSPWEGAKYVLPGDEKAPEAKK.

Belongs to the complex I 30 kDa subunit family. As to quaternary structure, NDH-1 is composed of at least 14 different subunits, Nqo1 to Nqo14. The complex has a L-shaped structure, with the hydrophobic arm (subunits Nqo7, Nqo8, Nqo10 to Nqo14) embedded in the inner membrane and the hydrophilic peripheral arm (subunits Nqo1 to Nqo6, Nqo9) protruding into the bacterial cytoplasm. The hydrophilic domain contains all the redox centers.

It is found in the cell inner membrane. The catalysed reaction is a quinone + NADH + 5 H(+)(in) = a quinol + NAD(+) + 4 H(+)(out). Its function is as follows. NDH-1 shuttles electrons from NADH, via FMN and iron-sulfur (Fe-S) centers, to quinones in the respiratory chain. The immediate electron acceptor for the enzyme in this species is believed to be ubiquinone. Couples the redox reaction to proton translocation (for every two electrons transferred, four hydrogen ions are translocated across the cytoplasmic membrane), and thus conserves the redox energy in a proton gradient. The sequence is that of NADH-quinone oxidoreductase chain 5 (nqo5) from Paracoccus denitrificans.